A 176-amino-acid chain; its full sequence is ATP synthase subunit b (176 aa).

The chain crosses the membrane as a helical span at residues 7-27; it reads IQIPDGSAIFVLLTFILLMFI. The tract at residues 75–94 is disordered; the sequence is SQSQATALMENARKSSEEQS. Basic and acidic residues predominate over residues 85–94; sequence NARKSSEEQS.

This sequence belongs to the ATPase B chain family. As to quaternary structure, F-type ATPases have 2 components, F(1) - the catalytic core - and F(0) - the membrane proton channel. F(1) has five subunits: alpha(3), beta(3), gamma(1), delta(1), epsilon(1). F(0) has three main subunits: a(1), b(2) and c(10-14). The alpha and beta chains form an alternating ring which encloses part of the gamma chain. F(1) is attached to F(0) by a central stalk formed by the gamma and epsilon chains, while a peripheral stalk is formed by the delta and b chains.

The protein localises to the cell membrane. In terms of biological role, f(1)F(0) ATP synthase produces ATP from ADP in the presence of a proton or sodium gradient. F-type ATPases consist of two structural domains, F(1) containing the extramembraneous catalytic core and F(0) containing the membrane proton channel, linked together by a central stalk and a peripheral stalk. During catalysis, ATP synthesis in the catalytic domain of F(1) is coupled via a rotary mechanism of the central stalk subunits to proton translocation. Functionally, component of the F(0) channel, it forms part of the peripheral stalk, linking F(1) to F(0). The polypeptide is ATP synthase subunit b (Oenococcus oeni (strain ATCC BAA-331 / PSU-1)).